The primary structure comprises 517 residues: Peptide chain release factor 3 (517 aa).

Residues 9-269 enclose the tr-type G domain; the sequence is AKRRTFAIIS…DFVEHAPAPR (261 aa). GTP-binding positions include 18 to 25, 86 to 90, and 140 to 143; these read SHPDAGKT, DTPGH, and NKLD.

This sequence belongs to the TRAFAC class translation factor GTPase superfamily. Classic translation factor GTPase family. PrfC subfamily.

It localises to the cytoplasm. In terms of biological role, increases the formation of ribosomal termination complexes and stimulates activities of RF-1 and RF-2. It binds guanine nucleotides and has strong preference for UGA stop codons. It may interact directly with the ribosome. The stimulation of RF-1 and RF-2 is significantly reduced by GTP and GDP, but not by GMP. This chain is Peptide chain release factor 3, found in Halorhodospira halophila (strain DSM 244 / SL1) (Ectothiorhodospira halophila (strain DSM 244 / SL1)).